We begin with the raw amino-acid sequence, 373 residues long: Probable leucine aminopeptidase 1 (373 aa).

The N-terminal stretch at 1–18 is a signal peptide; that stretch reads MKLLSVLALSATATSVLG. Zn(2+) is bound by residues His176 and Asp195. Asn196 carries an N-linked (GlcNAc...) asparagine glycan. Zn(2+)-binding residues include Glu234 and Asp261. A glycan (N-linked (GlcNAc...) asparagine) is linked at Asn288. A disulfide bridge connects residues Cys310 and Cys314. Zn(2+) is bound at residue His343.

The protein belongs to the peptidase M28 family. M28E subfamily. In terms of assembly, monomer. The cofactor is Zn(2+).

It localises to the secreted. Functionally, extracellular aminopeptidase which contributes to pathogenicity. The protein is Probable leucine aminopeptidase 1 (LAP1) of Trichophyton verrucosum (strain HKI 0517).